A 143-amino-acid polypeptide reads, in one-letter code: Peptide methionine sulfoxide reductase MsrB (143 aa).

The MsrB domain maps to 5-126 (KEEKIKSLNR…NSAALRFVPK (122 aa)). Cys-115 (nucleophile) is an active-site residue.

It belongs to the MsrB Met sulfoxide reductase family.

The enzyme catalyses L-methionyl-[protein] + [thioredoxin]-disulfide + H2O = L-methionyl-(R)-S-oxide-[protein] + [thioredoxin]-dithiol. The polypeptide is Peptide methionine sulfoxide reductase MsrB (Bacillus subtilis (strain 168)).